The following is a 145-amino-acid chain: Transcription antitermination protein NusB (145 aa).

The protein belongs to the NusB family.

Involved in transcription antitermination. Required for transcription of ribosomal RNA (rRNA) genes. Binds specifically to the boxA antiterminator sequence of the ribosomal RNA (rrn) operons. This is Transcription antitermination protein NusB from Burkholderia lata (strain ATCC 17760 / DSM 23089 / LMG 22485 / NCIMB 9086 / R18194 / 383).